We begin with the raw amino-acid sequence, 951 residues long: Metal transporter CNNM1 (951 aa).

A helical transmembrane segment spans residues 23 to 43 (AVLLLFFSLSPRPPAAAAWLL). Positions 116-135 (GGVAPSAVPTRPPGPQRCRE) are disordered. The CNNM transmembrane domain maps to 218-414 (LLPPAWLRAL…DPYSDLVKEE (197 aa)). A run of 3 helical transmembrane segments spans residues 222–242 (AWLRALGALLLLALSALFSGL), 282–302 (LLCTLLLGQAGANAALAGWLY), and 321–341 (IHFPWLPALVCTGAVFLGAEI). 2 CBS domains span residues 433 to 495 (LTPL…CTPL) and 502 to 568 (YNRP…ILDE). Polar residues-rich tracts occupy residues 731 to 740 (SRCSGLNRSE) and 814 to 824 (KAPTTRGTPQT). Disordered regions lie at residues 731 to 753 (SRCSGLNRSESPNRERSDFGGSN) and 795 to 830 (MDSSPQSPDMEAFTDGDSTKAPTTRGTPQTPKDDPA). A phosphothreonine mark is found at Thr821 and Thr824. Phosphoserine is present on Ser850. Residues 920–951 (KLLRTLSGQKRKRSPEGERTSEDNSNLTPLIT) are disordered. Over residues 942–951 (DNSNLTPLIT) the composition is skewed to polar residues.

Belongs to the ACDP family. As to expression, restricted to brain and testis.

It localises to the cell membrane. Its function is as follows. Probable metal transporter. The sequence is that of Metal transporter CNNM1 (CNNM1) from Homo sapiens (Human).